A 384-amino-acid polypeptide reads, in one-letter code: 1-deoxy-D-xylulose 5-phosphate reductoisomerase (384 aa).

Residues threonine 10, glycine 11, serine 12, isoleucine 13, arginine 37, asparagine 38, and asparagine 124 each contribute to the NADPH site. A 1-deoxy-D-xylulose 5-phosphate-binding site is contributed by lysine 125. Glutamate 126 contributes to the NADPH binding site. Position 150 (aspartate 150) interacts with Mn(2+). Residues serine 151, glutamate 152, serine 176, and histidine 199 each contribute to the 1-deoxy-D-xylulose 5-phosphate site. Glutamate 152 contributes to the Mn(2+) binding site. Residue glycine 205 coordinates NADPH. Serine 212, asparagine 217, lysine 218, and glutamate 221 together coordinate 1-deoxy-D-xylulose 5-phosphate. Glutamate 221 lines the Mn(2+) pocket.

The protein belongs to the DXR family. Requires Mg(2+) as cofactor. It depends on Mn(2+) as a cofactor.

It carries out the reaction 2-C-methyl-D-erythritol 4-phosphate + NADP(+) = 1-deoxy-D-xylulose 5-phosphate + NADPH + H(+). The protein operates within isoprenoid biosynthesis; isopentenyl diphosphate biosynthesis via DXP pathway; isopentenyl diphosphate from 1-deoxy-D-xylulose 5-phosphate: step 1/6. Functionally, catalyzes the NADPH-dependent rearrangement and reduction of 1-deoxy-D-xylulose-5-phosphate (DXP) to 2-C-methyl-D-erythritol 4-phosphate (MEP). This chain is 1-deoxy-D-xylulose 5-phosphate reductoisomerase, found in Clostridium perfringens (strain 13 / Type A).